The following is a 95-amino-acid chain: Co-chaperonin GroES (95 aa).

The protein belongs to the GroES chaperonin family. Heptamer of 7 subunits arranged in a ring. Interacts with the chaperonin GroEL.

The protein resides in the cytoplasm. Functionally, together with the chaperonin GroEL, plays an essential role in assisting protein folding. The GroEL-GroES system forms a nano-cage that allows encapsulation of the non-native substrate proteins and provides a physical environment optimized to promote and accelerate protein folding. GroES binds to the apical surface of the GroEL ring, thereby capping the opening of the GroEL channel. This is Co-chaperonin GroES from Geobacter metallireducens (strain ATCC 53774 / DSM 7210 / GS-15).